Reading from the N-terminus, the 325-residue chain is Malate dehydrogenase (325 aa).

Gly9–Gly15 lines the NAD(+) pocket. Residues Arg90 and Arg96 each coordinate substrate. Residues Asn103, Gln110, and Val127–Asn129 contribute to the NAD(+) site. Positions 129 and 160 each coordinate substrate. The active-site Proton acceptor is the His185.

This sequence belongs to the LDH/MDH superfamily. MDH type 2 family.

It carries out the reaction (S)-malate + NAD(+) = oxaloacetate + NADH + H(+). Catalyzes the reversible oxidation of malate to oxaloacetate. The protein is Malate dehydrogenase of Rubrobacter xylanophilus (strain DSM 9941 / JCM 11954 / NBRC 16129 / PRD-1).